We begin with the raw amino-acid sequence, 288 residues long: Tryptophan 2,3-dioxygenase (288 aa).

Substrate is bound by residues Phe57–His61, Tyr119, and Arg123. Residue His246 participates in heme binding. Thr260 lines the substrate pocket.

This sequence belongs to the tryptophan 2,3-dioxygenase family. As to quaternary structure, homotetramer. It depends on heme as a cofactor.

It carries out the reaction L-tryptophan + O2 = N-formyl-L-kynurenine. The protein operates within amino-acid degradation; L-tryptophan degradation via kynurenine pathway; L-kynurenine from L-tryptophan: step 1/2. In terms of biological role, heme-dependent dioxygenase that catalyzes the oxidative cleavage of the L-tryptophan (L-Trp) pyrrole ring and converts L-tryptophan to N-formyl-L-kynurenine. Catalyzes the oxidative cleavage of the indole moiety. The protein is Tryptophan 2,3-dioxygenase of Pseudomonas aeruginosa (strain ATCC 15692 / DSM 22644 / CIP 104116 / JCM 14847 / LMG 12228 / 1C / PRS 101 / PAO1).